Here is a 413-residue protein sequence, read N- to C-terminus: MQRIIQFFSQRATTLFFPMALILYDFAAYLTTDLIQPGIINVVRDFNADVSLAPASVSLYLAGGMALQWLLGPLSDRIGRRPVLIAGALIFTLACAATLLTTSMTQFLVARFVQGTSICFIATVGYVTVQEAFGQTKAIKLMAIITSIVLVAPVIGPLSGAALMHFVHWKVLFGIIAVMGLLALCGLLLAMPETVQRGAVPFSAVSVLRDFRNVFRNPIFLTGAATLSLSYIPMMSWVAVSPVILIDAGGMSTSQFAWAQVPVFGAVIVANMIVVRLVKDPTRPRFIWRAVPIQLSGLATLLLGNLLLPHVWLWSVLGTSLYAFGIGMIFPTLFRFTLFSNNLPKGTVSASLNMVILTVMAVSVEVGRWLWFHGGRLPFHLLAAVAGVIVVFTLATLLQRVRQHEAAELAAEK.

The Cytoplasmic portion of the chain corresponds to 1-14; it reads MQRIIQFFSQRATT. The chain crosses the membrane as a helical span at residues 15–35; sequence LFFPMALILYDFAAYLTTDLI. At 36–51 the chain is on the periplasmic side; the sequence is QPGIINVVRDFNADVS. Residues 52–72 traverse the membrane as a helical segment; it reads LAPASVSLYLAGGMALQWLLG. Residues 73–81 lie on the Cytoplasmic side of the membrane; it reads PLSDRIGRR. Residues 82–102 traverse the membrane as a helical segment; sequence PVLIAGALIFTLACAATLLTT. Residues 103 to 106 are Periplasmic-facing; that stretch reads SMTQ. A helical transmembrane segment spans residues 107–127; the sequence is FLVARFVQGTSICFIATVGYV. Residues 128 to 140 lie on the Cytoplasmic side of the membrane; the sequence is TVQEAFGQTKAIK. Residues 141-161 traverse the membrane as a helical segment; sequence LMAIITSIVLVAPVIGPLSGA. The Periplasmic segment spans residues 162–170; the sequence is ALMHFVHWK. A helical transmembrane segment spans residues 171 to 191; the sequence is VLFGIIAVMGLLALCGLLLAM. The Cytoplasmic portion of the chain corresponds to 192 to 225; that stretch reads PETVQRGAVPFSAVSVLRDFRNVFRNPIFLTGAA. A helical membrane pass occupies residues 226 to 246; it reads TLSLSYIPMMSWVAVSPVILI. Topologically, residues 247 to 254 are periplasmic; the sequence is DAGGMSTS. The chain crosses the membrane as a helical span at residues 255–275; it reads QFAWAQVPVFGAVIVANMIVV. Residues 276–289 lie on the Cytoplasmic side of the membrane; it reads RLVKDPTRPRFIWR. 2 helical membrane-spanning segments follow: residues 290–310 and 311–331; these read AVPI…LLPH and VWLW…MIFP. At 332–351 the chain is on the cytoplasmic side; sequence TLFRFTLFSNNLPKGTVSAS. The chain crosses the membrane as a helical span at residues 352 to 372; it reads LNMVILTVMAVSVEVGRWLWF. Residues 373 to 376 are Periplasmic-facing; sequence HGGR. The helical transmembrane segment at 377 to 397 threads the bilayer; the sequence is LPFHLLAAVAGVIVVFTLATL. Residues 398–413 are Cytoplasmic-facing; sequence LQRVRQHEAAELAAEK.

It belongs to the major facilitator superfamily.

It is found in the cell inner membrane. Its function is as follows. Proton-dependent efflux pump. Confers resistance to a broad spectrum of chemically unrelated substrates. The sequence is that of Multidrug resistance protein MdtM (mdtM) from Salmonella typhimurium (strain LT2 / SGSC1412 / ATCC 700720).